The sequence spans 1358 residues: DNA-directed RNA polymerase subunit beta (1358 aa).

Belongs to the RNA polymerase beta chain family. As to quaternary structure, the RNAP catalytic core consists of 2 alpha, 1 beta, 1 beta' and 1 omega subunit. When a sigma factor is associated with the core the holoenzyme is formed, which can initiate transcription.

The enzyme catalyses RNA(n) + a ribonucleoside 5'-triphosphate = RNA(n+1) + diphosphate. Its function is as follows. DNA-dependent RNA polymerase catalyzes the transcription of DNA into RNA using the four ribonucleoside triphosphates as substrates. The protein is DNA-directed RNA polymerase subunit beta of Neorickettsia sennetsu (strain ATCC VR-367 / Miyayama) (Ehrlichia sennetsu).